The sequence spans 409 residues: 3-isopropylmalate dehydrogenase 1, chloroplastic (409 aa).

Residues 1–37 (MAAFLQTNISLNAIKIVPGKYSSLTDHQFRAPYRIRC) constitute a chloroplast transit peptide. At S74 the chain carries Phosphoserine. 118 to 133 (IGGYKWDKNEKHLRPE) contacts NAD(+). Positions 140, 150, and 178 each coordinate substrate. An NAD(+)-binding site is contributed by N238. A substrate-binding site is contributed by D268. D268 provides a ligand contact to Mg(2+). N269 is a binding site for NAD(+). Mg(2+)-binding residues include D292 and D296. Residue 322–338 (EPIHGSAPDIAGQDKAN) coordinates NAD(+).

It belongs to the isocitrate and isopropylmalate dehydrogenases family. In terms of assembly, homodimer. The cofactor is Mg(2+). Mn(2+) is required as a cofactor. Highly expressed in seedlings, leaves, stems and roots and, to a lower extent, in flowers, pollen and siliques.

The protein localises to the plastid. The protein resides in the chloroplast stroma. The catalysed reaction is (2R,3S)-3-isopropylmalate + NAD(+) = 4-methyl-2-oxopentanoate + CO2 + NADH. The protein operates within amino-acid biosynthesis; L-leucine biosynthesis; L-leucine from 3-methyl-2-oxobutanoate: step 3/4. It functions in the pathway secondary metabolite biosynthesis. Its activity is regulated as follows. Regulated by a thiol-based redox modification; oxidation by CuCl(2) leads to a decreased activity. Its function is as follows. Involved in both glucosinolate and leucine biosynthesis; catalyzes the oxidative decarboxylation step in both leucine biosynthesis (primary metabolism) and methionine chain elongation of glucosinolates (specialized metabolism). Catalyzes the oxidation of 3-carboxy-2-hydroxy-4-methylpentanoate (3-isopropylmalate, 3-IPM) to 3-carboxy-4-methyl-2-oxopentanoate. The product decarboxylates to 4-methyl-2 oxopentanoate. Required during pollen development and involved in embryo sac development. More active on 3-isopropylmalate and NAD(+) than towards D-malate. The protein is 3-isopropylmalate dehydrogenase 1, chloroplastic of Arabidopsis thaliana (Mouse-ear cress).